The following is a 278-amino-acid chain: Rhomboid protease GlpG (278 aa).

Transmembrane regions (helical) follow at residues 94–114 (AGPL…LMLI), 143–163 (AFLH…WYLG), 175–195 (LLVL…LFSG), 196–216 (ANFG…WLTG), 224–241 (ISLP…LIAG), and 245–267 (ILGL…LMAF). Ser202 acts as the Nucleophile in catalysis. Residue His255 is part of the active site.

Belongs to the peptidase S54 family.

Its subcellular location is the cell inner membrane. The catalysed reaction is Cleaves type-1 transmembrane domains using a catalytic dyad composed of serine and histidine that are contributed by different transmembrane domains.. Functionally, rhomboid-type serine protease that catalyzes intramembrane proteolysis. In Yersinia pseudotuberculosis serotype I (strain IP32953), this protein is Rhomboid protease GlpG.